The chain runs to 55 residues: uncharacterized protein (55 aa).

This is an uncharacterized protein from Orgyia pseudotsugata multicapsid polyhedrosis virus (OpMNPV).